Consider the following 360-residue polypeptide: AA9 family lytic polysaccharide monooxygenase A (360 aa).

The first 19 residues, 1-19 (MKTSFGLLALAAAAKLVNA), serve as a signal peptide directing secretion. His-20 and His-102 together coordinate Cu(2+). Cys-62 and Cys-183 are oxidised to a cystine. His-169 serves as a coordination point for O2. Tyr-180 is a Cu(2+) binding site. The segment at 254-293 (TSAASASSTKAPATTAAPVQTESAKPATSTTQAAAPTTLV) is disordered. The CBM1 domain maps to 322-358 (GVVKMYAQCGGMNYSGSTTCESGLTCKQWNPYYHQCV). Asn-334 carries an N-linked (GlcNAc...) asparagine glycan.

Belongs to the polysaccharide monooxygenase AA9 family. Cu(2+) serves as cofactor.

The protein resides in the secreted. It carries out the reaction [(1-&gt;4)-beta-D-glucosyl]n+m + reduced acceptor + O2 = 4-dehydro-beta-D-glucosyl-[(1-&gt;4)-beta-D-glucosyl]n-1 + [(1-&gt;4)-beta-D-glucosyl]m + acceptor + H2O.. Lytic polysaccharide monooxygenase (LPMO) that depolymerizes crystalline and amorphous polysaccharides via the oxidation of scissile alpha- or beta-(1-4)-glycosidic bonds, yielding C4 oxidation products. Catalysis by LPMOs requires the reduction of the active-site copper from Cu(II) to Cu(I) by a reducing agent and H(2)O(2) or O(2) as a cosubstrate. The polypeptide is AA9 family lytic polysaccharide monooxygenase A (eglD) (Aspergillus terreus (strain NIH 2624 / FGSC A1156)).